We begin with the raw amino-acid sequence, 90 residues long: MEKLFVLVFALALLAFSSDASPILTEKQAKQLLRSRRQDRPNKPGFPDEPMREYMHHLLALEHRAEEQFLEHWLNPHCKPHCDRNIVHPV.

Residues 1–20 (MEKLFVLVFALALLAFSSDA) form the signal peptide.

Its subcellular location is the secreted. This is an uncharacterized protein from Mus musculus (Mouse).